Consider the following 374-residue polypeptide: Chaperone protein DnaJ (374 aa).

Positions 5 to 70 (DYYEVLGVER…SKRAAYDQYG (66 aa)) constitute a J domain. The CR-type zinc-finger motif lies at 133–211 (GTTVNIRVPT…CHGEGRVEEY (79 aa)). The Zn(2+) site is built by Cys146, Cys149, Cys163, Cys166, Cys185, Cys188, Cys199, and Cys202. CXXCXGXG motif repeat units lie at residues 146–153 (CKPCDGSG), 163–170 (CPTCGGIG), 185–192 (CPRCHGQG), and 199–206 (CDSCHGEG).

This sequence belongs to the DnaJ family. In terms of assembly, homodimer. It depends on Zn(2+) as a cofactor.

The protein resides in the cytoplasm. Its function is as follows. Participates actively in the response to hyperosmotic and heat shock by preventing the aggregation of stress-denatured proteins and by disaggregating proteins, also in an autonomous, DnaK-independent fashion. Unfolded proteins bind initially to DnaJ; upon interaction with the DnaJ-bound protein, DnaK hydrolyzes its bound ATP, resulting in the formation of a stable complex. GrpE releases ADP from DnaK; ATP binding to DnaK triggers the release of the substrate protein, thus completing the reaction cycle. Several rounds of ATP-dependent interactions between DnaJ, DnaK and GrpE are required for fully efficient folding. Also involved, together with DnaK and GrpE, in the DNA replication of plasmids through activation of initiation proteins. This chain is Chaperone protein DnaJ, found in Pseudomonas fluorescens (strain ATCC BAA-477 / NRRL B-23932 / Pf-5).